Here is a 217-residue protein sequence, read N- to C-terminus: Protein-L-isoaspartate O-methyltransferase (217 aa).

Ser-62 is an active-site residue.

It belongs to the methyltransferase superfamily. L-isoaspartyl/D-aspartyl protein methyltransferase family.

It localises to the cytoplasm. It catalyses the reaction [protein]-L-isoaspartate + S-adenosyl-L-methionine = [protein]-L-isoaspartate alpha-methyl ester + S-adenosyl-L-homocysteine. Catalyzes the methyl esterification of L-isoaspartyl residues in peptides and proteins that result from spontaneous decomposition of normal L-aspartyl and L-asparaginyl residues. It plays a role in the repair and/or degradation of damaged proteins. The protein is Protein-L-isoaspartate O-methyltransferase of Trichlorobacter lovleyi (strain ATCC BAA-1151 / DSM 17278 / SZ) (Geobacter lovleyi).